The sequence spans 369 residues: Histidinol-phosphate aminotransferase (369 aa).

Lysine 223 carries the post-translational modification N6-(pyridoxal phosphate)lysine.

This sequence belongs to the class-II pyridoxal-phosphate-dependent aminotransferase family. Histidinol-phosphate aminotransferase subfamily. As to quaternary structure, homodimer. Pyridoxal 5'-phosphate is required as a cofactor.

It catalyses the reaction L-histidinol phosphate + 2-oxoglutarate = 3-(imidazol-4-yl)-2-oxopropyl phosphate + L-glutamate. It participates in amino-acid biosynthesis; L-histidine biosynthesis; L-histidine from 5-phospho-alpha-D-ribose 1-diphosphate: step 7/9. Its function is as follows. Catalyzes the conversion of imidazole acetol phosphate to histidinol phosphate. Can also transaminate aromatic amino acids and histidine in addition to histidinol phosphate. This chain is Histidinol-phosphate aminotransferase, found in Zymomonas mobilis subsp. mobilis (strain ATCC 31821 / ZM4 / CP4).